Consider the following 208-residue polypeptide: Uridine kinase (208 aa).

11–18 (GGTGSGKS) is a binding site for ATP.

Belongs to the uridine kinase family.

The protein resides in the cytoplasm. It catalyses the reaction uridine + ATP = UMP + ADP + H(+). The catalysed reaction is cytidine + ATP = CMP + ADP + H(+). It participates in pyrimidine metabolism; CTP biosynthesis via salvage pathway; CTP from cytidine: step 1/3. Its pathway is pyrimidine metabolism; UMP biosynthesis via salvage pathway; UMP from uridine: step 1/1. This chain is Uridine kinase, found in Clostridium perfringens (strain SM101 / Type A).